Reading from the N-terminus, the 213-residue chain is Octanoyltransferase (213 aa).

The BPL/LPL catalytic domain occupies 32-207 (DSTLDEIWLV…NILALLNNPD (176 aa)). Residues 71–78 (RGGQVTYH), 138–140 (SLG), and 151–153 (GLA) each bind substrate. C169 acts as the Acyl-thioester intermediate in catalysis.

It belongs to the LipB family.

The protein resides in the cytoplasm. It carries out the reaction octanoyl-[ACP] + L-lysyl-[protein] = N(6)-octanoyl-L-lysyl-[protein] + holo-[ACP] + H(+). It participates in protein modification; protein lipoylation via endogenous pathway; protein N(6)-(lipoyl)lysine from octanoyl-[acyl-carrier-protein]: step 1/2. Its function is as follows. Catalyzes the transfer of endogenously produced octanoic acid from octanoyl-acyl-carrier-protein onto the lipoyl domains of lipoate-dependent enzymes. Lipoyl-ACP can also act as a substrate although octanoyl-ACP is likely to be the physiological substrate. In Escherichia coli O8 (strain IAI1), this protein is Octanoyltransferase.